A 547-amino-acid chain; its full sequence is CTP synthase (547 aa).

The interval methionine 1–leucine 267 is amidoligase domain. A CTP-binding site is contributed by serine 14. UTP is bound at residue serine 14. ATP contacts are provided by residues serine 15–leucine 20 and aspartate 72. 2 residues coordinate Mg(2+): aspartate 72 and glutamate 141. CTP contacts are provided by residues aspartate 148 to glutamate 150, lysine 188 to glutamine 193, and lysine 224. Residues lysine 188–glutamine 193 and lysine 224 each bind UTP. In terms of domain architecture, Glutamine amidotransferase type-1 spans threonine 292–glycine 545. Glycine 354 serves as a coordination point for L-glutamine. Cysteine 381 serves as the catalytic Nucleophile; for glutamine hydrolysis. L-glutamine-binding positions include leucine 382 to glutamine 385, glutamate 405, and arginine 473. Residues histidine 518 and glutamate 520 contribute to the active site.

Belongs to the CTP synthase family. Homotetramer.

It catalyses the reaction UTP + L-glutamine + ATP + H2O = CTP + L-glutamate + ADP + phosphate + 2 H(+). The catalysed reaction is L-glutamine + H2O = L-glutamate + NH4(+). The enzyme catalyses UTP + NH4(+) + ATP = CTP + ADP + phosphate + 2 H(+). Its pathway is pyrimidine metabolism; CTP biosynthesis via de novo pathway; CTP from UDP: step 2/2. With respect to regulation, allosterically activated by GTP, when glutamine is the substrate; GTP has no effect on the reaction when ammonia is the substrate. The allosteric effector GTP functions by stabilizing the protein conformation that binds the tetrahedral intermediate(s) formed during glutamine hydrolysis. Inhibited by the product CTP, via allosteric rather than competitive inhibition. Its function is as follows. Catalyzes the ATP-dependent amination of UTP to CTP with either L-glutamine or ammonia as the source of nitrogen. Regulates intracellular CTP levels through interactions with the four ribonucleotide triphosphates. In Nitratidesulfovibrio vulgaris (strain DP4) (Desulfovibrio vulgaris), this protein is CTP synthase.